The chain runs to 170 residues: Alpha-crystallin A chain (170 aa).

M1 bears the N-acetylmethionine mark. The interval 1–63 (MDVTIQQPWF…RTALDSGISE (63 aa)) is required for complex formation with BFSP1 and BFSP2. Q6 carries the deamidated glutamine; partial modification. A Phosphoserine modification is found at S45. Position 50 is a deamidated glutamine; partial (Q50). The region spanning 52–161 (LFRTALDSGI…SERPIPVSRE (110 aa)) is the sHSP domain. N6-acetyllysine occurs at positions 70 and 99. Residue H100 participates in Zn(2+) binding. The residue at position 101 (N101) is a Deamidated asparagine; partial. Residues E102, H107, and H151 each coordinate Zn(2+). The segment at 144–170 (PKIVDPSHSERPIPVSREEKPSSAPSS) is disordered. The span at 148–164 (DPSHSERPIPVSREEKP) shows a compositional bias: basic and acidic residues. The O-linked (GlcNAc) serine glycan is linked to S159.

This sequence belongs to the small heat shock protein (HSP20) family. Heteromer composed of three CRYAA and one CRYAB subunits. Inter-subunit bridging via zinc ions enhances stability, which is crucial as there is no protein turn over in the lens. Can also form homodimers and homotetramers (dimers of dimers) which serve as the building blocks of homooligomers. Within homooligomers, the zinc-binding motif is created from residues of 3 different molecules. His-100 and Glu-102 from one molecule are ligands of the zinc ion, and His-107 and His-151 residues from additional molecules complete the site with tetrahedral coordination geometry. Part of a complex required for lens intermediate filament formation composed of BFSP1, BFSP2 and CRYAA. Post-translationally, acetylation at Lys-70 may increase chaperone activity. In terms of processing, undergoes age-dependent proteolytical cleavage at the C-terminus.

It is found in the cytoplasm. The protein localises to the nucleus. Contributes to the transparency and refractive index of the lens. Acts as a chaperone, preventing aggregation of various proteins under a wide range of stress conditions. Required for the correct formation of lens intermediate filaments as part of a complex composed of BFSP1, BFSP2 and CRYAA. The protein is Alpha-crystallin A chain (CRYAA) of Bradypus variegatus (Brown-throated three-fingered sloth).